The sequence spans 26 residues: uncharacterized protein (26 aa).

It belongs to the asfivirus E66L family.

This is an uncharacterized protein from Ornithodoros (relapsing fever ticks).